We begin with the raw amino-acid sequence, 184 residues long: Photosystem I assembly protein Ycf4 (184 aa).

2 helical membrane passes run 21-41 (YFWA…GLSS) and 63-83 (IIMT…WLTI).

Belongs to the Ycf4 family.

It localises to the plastid. The protein localises to the chloroplast thylakoid membrane. Functionally, seems to be required for the assembly of the photosystem I complex. The polypeptide is Photosystem I assembly protein Ycf4 (Gracilaria tenuistipitata var. liui (Red alga)).